We begin with the raw amino-acid sequence, 676 residues long: Zinc finger CCCH domain-containing protein 38 (676 aa).

Disordered regions lie at residues 1 to 134 (MEMS…DHLF), 172 to 217 (SSDY…RSSN), 245 to 307 (RKQP…SWID), 487 to 506 (SVQPNQATTQSNVVSSNPNQ), and 533 to 594 (IQEV…DPKG). Over residues 12–21 (SKWDSKEDTH) the composition is skewed to basic and acidic residues. Over residues 58 to 79 (RVSQNNDNSYFSEQDGTRQQFV) the composition is skewed to polar residues. Composition is skewed to basic and acidic residues over residues 101 to 110 (ARRDAGSYDR), 124 to 134 (EFNKRGSDHLF), and 192 to 212 (SEFTGEKETQRRDGGDGEGGF). The segment at 214–243 (RSSNIPCKFFAAGTGFCRNGKYCRFSHHVA) adopts a C3H1-type zinc-finger fold. Residues 251-262 (NNNNFYRQDNNN) show a composition bias toward low complexity. Basic and acidic residues predominate over residues 269 to 278 (KWNDVERLDN). A compositionally biased stretch (basic and acidic residues) spans 538-562 (LDPKENGDKKTDEASKEEEGKKTGE). Residues 563-583 (DTNDAENVVDEDEDGDDDGSD) are compositionally biased toward acidic residues. Residues 584 to 594 (EENKKEKDPKG) show a composition bias toward basic and acidic residues.

This chain is Zinc finger CCCH domain-containing protein 38, found in Arabidopsis thaliana (Mouse-ear cress).